The primary structure comprises 509 residues: UDP-N-acetylmuramyl-tripeptide synthetase (509 aa).

Ser-30 lines the UDP-N-acetyl-alpha-D-muramoyl-L-alanyl-D-glutamate pocket. An ATP-binding site is contributed by 111-117 (GTDGKTT). Residues 155-156 (ST), Thr-182, and Arg-192 contribute to the UDP-N-acetyl-alpha-D-muramoyl-L-alanyl-D-glutamate site. Lys-224 is modified (N6-carboxylysine).

Belongs to the MurCDEF family. MurE subfamily. In terms of processing, carboxylation is probably crucial for Mg(2+) binding and, consequently, for the gamma-phosphate positioning of ATP.

It localises to the cytoplasm. Its pathway is cell wall biogenesis; peptidoglycan biosynthesis. In terms of biological role, catalyzes the addition of an amino acid to the nucleotide precursor UDP-N-acetylmuramoyl-L-alanyl-D-glutamate (UMAG) in the biosynthesis of bacterial cell-wall peptidoglycan. This chain is UDP-N-acetylmuramyl-tripeptide synthetase, found in Roseiflexus sp. (strain RS-1).